Reading from the N-terminus, the 153-residue chain is Small heat shock protein HspB (153 aa).

The sHSP domain occupies 30 to 140; sequence AGTEDNYPPC…KPRRISISGS (111 aa).

It belongs to the small heat shock protein (HSP20) family.

The chain is Small heat shock protein HspB (hspB) from Bradyrhizobium diazoefficiens (strain JCM 10833 / BCRC 13528 / IAM 13628 / NBRC 14792 / USDA 110).